The following is a 347-amino-acid chain: Guanine nucleotide-binding protein alpha-6 subunit (347 aa).

In terms of domain architecture, G-alpha spans 30–347; sequence GITQVLLLGA…IIVGHVMDLV (318 aa). The segment at 33–46 is G1 motif; that stretch reads QVLLLGAGESGKST. GTP is bound by residues 38-45, 172-178, 197-201, 266-269, and alanine 322; these read GAGESGKS, LRARVTT, DVGGQ, and NKKD. Mg(2+) contacts are provided by serine 45 and threonine 178. A G2 motif region spans residues 170 to 178; that stretch reads DALRARVTT. The G3 motif stretch occupies residues 193–202; the sequence is MKIIDVGGQR. Residues 262–269 form a G4 motif region; the sequence is ILFLNKKD. The tract at residues 320 to 325 is G5 motif; it reads TIAVDT.

This sequence belongs to the G-alpha family. In terms of assembly, g proteins are composed of 3 units; alpha, beta and gamma. The alpha chain contains the guanine nucleotide binding site.

Guanine nucleotide-binding proteins (G proteins) are involved as modulators or transducers in various transmembrane signaling systems. G alpha-6 is involved in the folic acid chemotaxis signal transduction pathway. This is Guanine nucleotide-binding protein alpha-6 subunit (gpaF) from Dictyostelium discoideum (Social amoeba).